Consider the following 152-residue polypeptide: Transcription elongation factor Spt5 (152 aa).

In terms of domain architecture, KOW spans E98–V127.

It belongs to the archaeal Spt5 family. As to quaternary structure, heterodimer composed of Spt4 and Spt5. Interacts with RNA polymerase (RNAP).

Functionally, stimulates transcription elongation. This chain is Transcription elongation factor Spt5, found in Acidianus ambivalens (Desulfurolobus ambivalens).